The chain runs to 239 residues: Serine protease SplF (239 aa).

The first 36 residues, 1–36 (MNKNIIIKSIAALTILTSITGVGTTVVDGIQQTAKA), serve as a signal peptide directing secretion. Active-site charge relay system residues include histidine 75, aspartate 114, and serine 192.

This sequence belongs to the peptidase S1B family.

The protein resides in the secreted. The protein is Serine protease SplF (splF) of Staphylococcus aureus (strain JH9).